Reading from the N-terminus, the 326-residue chain is Fructose-1,6-bisphosphatase class 1 (326 aa).

The protein belongs to the FBPase class 1 family. As to quaternary structure, homotetramer.

The protein resides in the cytoplasm. It catalyses the reaction beta-D-fructose 1,6-bisphosphate + H2O = beta-D-fructose 6-phosphate + phosphate. The protein operates within carbohydrate biosynthesis; gluconeogenesis. The chain is Fructose-1,6-bisphosphatase class 1 from Methylobacterium sp. (strain 4-46).